Consider the following 227-residue polypeptide: Triosephosphate isomerase (227 aa).

9-11 (NFK) serves as a coordination point for substrate. The Electrophile role is filled by His93. Glu141 serves as the catalytic Proton acceptor. Substrate is bound by residues Ile146, Gly180, and 201–202 (AS).

It belongs to the triosephosphate isomerase family. Homotetramer; dimer of dimers.

The protein localises to the cytoplasm. It catalyses the reaction D-glyceraldehyde 3-phosphate = dihydroxyacetone phosphate. The protein operates within carbohydrate biosynthesis; gluconeogenesis. It participates in carbohydrate degradation; glycolysis; D-glyceraldehyde 3-phosphate from glycerone phosphate: step 1/1. Its function is as follows. Involved in the gluconeogenesis. Catalyzes stereospecifically the conversion of dihydroxyacetone phosphate (DHAP) to D-glyceraldehyde-3-phosphate (G3P). In Saccharolobus solfataricus (strain ATCC 35092 / DSM 1617 / JCM 11322 / P2) (Sulfolobus solfataricus), this protein is Triosephosphate isomerase.